The following is an 858-amino-acid chain: Beta-galactosidase 6 (858 aa).

Residues 1–30 (MAAATVGVLLRLLLLPVVVVVSLLVGASRA) form the signal peptide. Residue Asn-32 is glycosylated (N-linked (GlcNAc...) asparagine). Catalysis depends on Glu-189, which acts as the Proton donor. Glu-258 serves as the catalytic Nucleophile. N-linked (GlcNAc...) asparagine glycans are attached at residues Asn-259, Asn-482, Asn-507, Asn-595, and Asn-830. Residues 772-858 (QTQGPALRLE…KSLVVEAACS (87 aa)) enclose the SUEL-type lectin domain.

It belongs to the glycosyl hydrolase 35 family.

It localises to the secreted. It is found in the extracellular space. The protein resides in the apoplast. The catalysed reaction is Hydrolysis of terminal non-reducing beta-D-galactose residues in beta-D-galactosides.. Releases galactose by hydrolysis of plant cell wall galactose-containing polysaccharides such as galacto-xyloglucan, pectic galactan and galactan (in vitro). The chain is Beta-galactosidase 6 from Oryza sativa subsp. japonica (Rice).